A 470-amino-acid polypeptide reads, in one-letter code: Cysteine--tRNA ligase (470 aa).

Cys-27 lines the Zn(2+) pocket. A 'HIGH' region motif is present at residues 29-39 (PTVYNYIHIGN). 3 residues coordinate Zn(2+): Cys-207, His-232, and Glu-236. Positions 264-268 (KMSKS) match the 'KMSKS' region motif. An ATP-binding site is contributed by Lys-267.

This sequence belongs to the class-I aminoacyl-tRNA synthetase family. In terms of assembly, monomer. It depends on Zn(2+) as a cofactor.

It localises to the cytoplasm. It catalyses the reaction tRNA(Cys) + L-cysteine + ATP = L-cysteinyl-tRNA(Cys) + AMP + diphosphate. The protein is Cysteine--tRNA ligase of Lachnoclostridium phytofermentans (strain ATCC 700394 / DSM 18823 / ISDg) (Clostridium phytofermentans).